The chain runs to 448 residues: MGVKTFTHNSPGHSQEMLGKLNMLRNDGHFCDITIRVQDKIFRAHKVVLAACSEFFRTKLVGQAEDSSQCVLDLHHVTVTGFTPLLEYAYTATLSINTENIIDVLAAASYMQMFSVASTCSEFMKSSILWNTQQEKILDTGQENPVNCNNFRDGSLSPVSSECSVVERTIPICRESRRKRKSYIVMSPESPLKCNTQTSSPQVLNPTPSYAEARNQSVDSSHAFPWTFPFGIDRRIQSEKVKQIESRTLELPGPSEVARRVTDYVACESTKVSSPLVMEDDVRVKVERLSDEEVHEEVSQPVSASQSSMSDQQTVPGSEQVQEDLLISPQSSSIGSIDEGVSEGLPTLQSTASTSVHADDDDRLENVQYPYQLYLAPTTSSTERPSPNGPDRPFQCPTCGVRFTRIQNLKQHMLIHSGIKPFQCDRCGKKFTRAYSLKMHRLKHEAIS.

The BTB domain occupies 31–98; that stretch reads CDITIRVQDK…AYTATLSINT (68 aa). Over residues 289-298 the composition is skewed to basic and acidic residues; that stretch reads LSDEEVHEEV. Residues 289–320 are disordered; it reads LSDEEVHEEVSQPVSASQSSMSDQQTVPGSEQ. The span at 299 to 313 shows a compositional bias: low complexity; the sequence is SQPVSASQSSMSDQQ. 2 C2H2-type zinc fingers span residues 394-416 and 422-444; these read FQCPTCGVRFTRIQNLKQHMLIH and FQCDRCGKKFTRAYSLKMHRLKH.

It is found in the nucleus. The polypeptide is Zinc finger and BTB domain-containing protein 44 (zbtb44) (Xenopus tropicalis (Western clawed frog)).